The following is a 608-amino-acid chain: UvrABC system protein C (608 aa).

Residues 15–93 (HQPGVYRMYN…IKQYLPKYNV (79 aa)) enclose the GIY-YIG domain. Residues 203–238 (RQVIQTLVKQMESASQSLNFEKAAIIRDQIQAMRRV) form the UVR domain.

This sequence belongs to the UvrC family. Interacts with UvrB in an incision complex.

The protein resides in the cytoplasm. Its function is as follows. The UvrABC repair system catalyzes the recognition and processing of DNA lesions. UvrC both incises the 5' and 3' sides of the lesion. The N-terminal half is responsible for the 3' incision and the C-terminal half is responsible for the 5' incision. This chain is UvrABC system protein C, found in Aliivibrio fischeri (strain ATCC 700601 / ES114) (Vibrio fischeri).